Reading from the N-terminus, the 626-residue chain is MDKLSIEQKIFIRRSDGRVHLAEIIKLEGGDSKLITVEWPEGHTVRGKELPLELVVLMNPHIFDSPRCSGGNAASANQTASISPRSMKQRIATGSLSPVLATAPPRQQTAPPVREDEVVHQAERMRKERERRREAQARTRLDREQGKNEDPGNPNWEVARMIRLQREQMESQRVRSGTTNERINCHQIMVCVRKRPLRRKELADREQDVVSIPSKHTLVVHEPRKHVNLVKFLENHSFRFDYVFDEECSNATVYEFTARPLIKHIFDGGMATCFAYGQTGSGKTYTMGGQFPGRHQSSMDGIYAMAAKDVFSTLKTVPYNKLNLKVYCSFFEIYGTRVFDLLMPGKPQLRVLEDRNQQVQVVGLTQNPVQNTAEVLDLLELGNSVRTSGHTSANSKSSRSHAVFQIVLRSAAGEKLHGKFSLIDLAGNERGADNSSADRQTRLEGSEINKSLLVLKECIRALGRQSSHLPFRGSKLTQVLRDSFIGGKKVKTCMIAMISPCLHSVEHTLNTLRYADRVKELSVESIPSKRMPDANLGSTSMSDIVCQSSTQRLFPCASSTSMPGGGNQAQQHTNTANDLNRSQKPTSKPTYPTSGQQLVQRKGSSQREASMMLTKSLAQFRGRNFP.

The globular stretch occupies residues 1 to 183 (MDKLSIEQKI…VRSGTTNERI (183 aa)). The interval 68–155 (CSGGNAASAN…GKNEDPGNPN (88 aa)) is disordered. Residues 72-96 (NAASANQTASISPRSMKQRIATGSL) show a composition bias toward polar residues. The segment covering 101–112 (ATAPPRQQTAPP) has biased composition (low complexity). Basic and acidic residues predominate over residues 113–150 (VREDEVVHQAERMRKERERRREAQARTRLDREQGKNED). The stretch at 115-150 (EDEVVHQAERMRKERERRREAQARTRLDREQGKNED) forms a coiled coil. The Kinesin motor domain maps to 187–521 (QIMVCVRKRP…LRYADRVKEL (335 aa)). 277–284 (GQTGSGKT) is an ATP binding site. The interval 557-608 (ASSTSMPGGGNQAQQHTNTANDLNRSQKPTSKPTYPTSGQQLVQRKGSSQRE) is disordered.

Belongs to the TRAFAC class myosin-kinesin ATPase superfamily. Kinesin family. MCAK/KIF2 subfamily.

It localises to the chromosome. The protein resides in the centromere. It is found in the kinetochore. Its subcellular location is the cytoplasm. The protein localises to the cytoskeleton. It localises to the spindle pole. Required during anaphase to drive sister chromatid separation to actively depolymerize kinetochore microtubules at their kinetochore-associated plus ends, thereby contributing to chromatid mobility through a 'Pac-man' mechanism. This Drosophila melanogaster (Fruit fly) protein is Kinesin-like protein Klp59C (Klp59C).